The chain runs to 177 residues: ATP synthase subunit delta (177 aa).

Belongs to the ATPase delta chain family. As to quaternary structure, F-type ATPases have 2 components, F(1) - the catalytic core - and F(0) - the membrane proton channel. F(1) has five subunits: alpha(3), beta(3), gamma(1), delta(1), epsilon(1). F(0) has three main subunits: a(1), b(2) and c(10-14). The alpha and beta chains form an alternating ring which encloses part of the gamma chain. F(1) is attached to F(0) by a central stalk formed by the gamma and epsilon chains, while a peripheral stalk is formed by the delta and b chains.

The protein resides in the cell membrane. In terms of biological role, f(1)F(0) ATP synthase produces ATP from ADP in the presence of a proton or sodium gradient. F-type ATPases consist of two structural domains, F(1) containing the extramembraneous catalytic core and F(0) containing the membrane proton channel, linked together by a central stalk and a peripheral stalk. During catalysis, ATP synthesis in the catalytic domain of F(1) is coupled via a rotary mechanism of the central stalk subunits to proton translocation. Its function is as follows. This protein is part of the stalk that links CF(0) to CF(1). It either transmits conformational changes from CF(0) to CF(1) or is implicated in proton conduction. The chain is ATP synthase subunit delta from Macrococcus caseolyticus (strain JCSC5402) (Macrococcoides caseolyticum).